Here is a 195-residue protein sequence, read N- to C-terminus: Thymidine kinase (195 aa).

ATP is bound by residues 9–16 (STMNAGKS) and 87–90 (DEAQ). The active-site Proton acceptor is Glu-88. 4 residues coordinate Zn(2+): Cys-145, Cys-147, Cys-182, and His-185.

It belongs to the thymidine kinase family. In terms of assembly, homotetramer.

The protein localises to the cytoplasm. The enzyme catalyses thymidine + ATP = dTMP + ADP + H(+). The sequence is that of Thymidine kinase from Jannaschia sp. (strain CCS1).